Here is a 403-residue protein sequence, read N- to C-terminus: Dynactin subunit 2-B (403 aa).

The disordered stretch occupies residues 1–26; that stretch reads MADPKYADLPGIARNEPDLYETSDLP. A coiled-coil region spans residues 99 to 132; the sequence is PQQKYQRLLHEVQELTQEVEKTQSTLKESATEEK. A disordered region spans residues 183–206; sequence AAKTRKDPEGKSSAKGPGPDNENL. The span at 184–194 shows a compositional bias: basic and acidic residues; it reads AKTRKDPEGKS. Residues 381-401 are a coiled coil; sequence KENLATVEDNFSSIDGRIKKL.

It belongs to the dynactin subunit 2 family. As to quaternary structure, subunit of dynactin, a multiprotein complex part of a tripartite complex with dynein and a adapter, such as BICDL1, BICD2 or HOOK3. The dynactin complex is built around ACTR1A/ACTB filament and consists of an actin-related filament composed of a shoulder domain, a pointed end and a barbed end. Its length is defined by its flexible shoulder domain. The soulder is composed of 2 DCTN1 subunits, 4 DCTN2 and 2 DCTN3.

The protein resides in the cytoplasm. It is found in the cytoskeleton. The protein localises to the microtubule organizing center. It localises to the centrosome. Its subcellular location is the membrane. In terms of biological role, part of the dynactin complex that activates the molecular motor dynein for ultra-processive transport along microtubules. In the dynactin soulder domain, binds the ACTR1A filament and acts as a molecular ruler to determine the length. Modulates cytoplasmic dynein binding to an organelle, and plays a role in prometaphase chromosome alignment and spindle organization during mitosis. Involved in anchoring microtubules to centrosomes. This chain is Dynactin subunit 2-B (dctn2-b), found in Xenopus laevis (African clawed frog).